A 377-amino-acid chain; its full sequence is RING-H2 finger protein ATL22 (377 aa).

A signal peptide spans 1–23; it reads MTSKLLPLLLNLIFLFFFPLLNA. Residues 244–264 traverse the membrane as a helical segment; sequence IMCLSLVGPLTALTFCVGLVM. Residues 327-369 form an RING-type; atypical zinc finger; the sequence is CPICLSEYATKETVRCLPECEHCFHTECIDAWLKLHSSCPVCR.

This sequence belongs to the RING-type zinc finger family. ATL subfamily.

It is found in the membrane. The catalysed reaction is S-ubiquitinyl-[E2 ubiquitin-conjugating enzyme]-L-cysteine + [acceptor protein]-L-lysine = [E2 ubiquitin-conjugating enzyme]-L-cysteine + N(6)-ubiquitinyl-[acceptor protein]-L-lysine.. Its pathway is protein modification; protein ubiquitination. This Arabidopsis thaliana (Mouse-ear cress) protein is RING-H2 finger protein ATL22 (ATL22).